Here is a 193-residue protein sequence, read N- to C-terminus: ER membrane protein complex subunit 4 (193 aa).

2 consecutive transmembrane segments (helical) span residues 91–111 and 137–157; these read ILAY…TLML and LWPA…IGVY.

Belongs to the EMC4 family.

The protein localises to the endoplasmic reticulum membrane. This chain is ER membrane protein complex subunit 4, found in Schizosaccharomyces pombe (strain 972 / ATCC 24843) (Fission yeast).